A 268-amino-acid chain; its full sequence is MAVFADLDLRAGSDLKALRGLVENAAHLGYSVVAINHVVEFKEKKQEIEKPVAVSELFTTLPIVQGKSKPIKILTRLTIIVSDPSHCNVLRATSSRVRLYDIVAVFPKTEKLFHVACTHLDVDLVCITVTEKLPFYFKRPPINVAIDRGVGFELLYSPAIKDSTMRRYTISNALNLMQVCKGKNVIISSAAERPLEIRGPYDVANLGLLFGLSESDAKAAVSTNCRAVLLHGETRKTAFGIISTVKKPRTSEADDDSLPACKKAKCES.

The residue at position 2 (Ala2) is an N-acetylalanine. Ser251 is modified (phosphoserine).

This sequence belongs to the eukaryotic/archaeal RNase P protein component 3 family. As to quaternary structure, component of nuclear RNase P and RNase MRP ribonucleoproteins. RNase P consists of a catalytic RNA moiety and about 10 protein subunits; POP1, POP4, POP5, POP7, RPP14, RPP21, RPP25, RPP30, RPP38 and RPP40. Within the RNase P complex, POP1, POP7 and RPP25 form the 'finger' subcomplex, POP5, RPP14, RPP40 and homodimeric RPP30 form the 'palm' subcomplex, and RPP21, POP4 and RPP38 form the 'wrist' subcomplex. All subunits of the RNase P complex interact with the catalytic RNA. Several subunits of RNase P are also part of the RNase MRP complex. RNase MRP consists of a catalytic RNA moiety and about 8 protein subunits; POP1, POP7, RPP25, RPP30, RPP38, RPP40 and possibly also POP4 and POP5.

The protein resides in the nucleus. It is found in the nucleolus. Its function is as follows. Component of ribonuclease P, a ribonucleoprotein complex that generates mature tRNA molecules by cleaving their 5'-ends. Also a component of the MRP ribonuclease complex, which cleaves pre-rRNA sequences. This Bos taurus (Bovine) protein is Ribonuclease P protein subunit p30 (RPP30).